The chain runs to 542 residues: ABC transport system permease protein p69 (542 aa).

Transmembrane regions (helical) follow at residues 23 to 43, 77 to 97, 114 to 134, 140 to 160, 212 to 232, 236 to 256, 287 to 307, 350 to 370, 386 to 406, 412 to 432, 481 to 501, and 509 to 529; these read ALAI…FSGF, IFYV…FSYL, FTIF…NNLF, ATLT…TAFF, LSIA…GGTV, LVLI…ASVF, VMIY…LVQL, TQAI…GFLA, LLVI…PIIF, IIFV…TINF, LVVF…NFFE, and GTIT…LMAV. An ABC transmembrane type-1 domain is found at 349 to 526; that stretch reads TTQAISLITL…VYLMVFEVIL (178 aa).

Belongs to the binding-protein-dependent transport system permease family.

Its subcellular location is the cell membrane. Functionally, probably part of a high-affinity transport system. The polypeptide is ABC transport system permease protein p69 (p69) (Mycoplasma pneumoniae (strain ATCC 29342 / M129 / Subtype 1) (Mycoplasmoides pneumoniae)).